The primary structure comprises 539 residues: Peptide chain release factor 3 (539 aa).

The tr-type G domain occupies 14-283 (EKRRNFAIIS…AFLEYALQPE (270 aa)). GTP is bound by residues 23–30 (SHPDAGKT), 91–95 (DTPGH), and 145–148 (NKLD).

It belongs to the TRAFAC class translation factor GTPase superfamily. Classic translation factor GTPase family. PrfC subfamily.

It is found in the cytoplasm. Its function is as follows. Increases the formation of ribosomal termination complexes and stimulates activities of RF-1 and RF-2. It binds guanine nucleotides and has strong preference for UGA stop codons. It may interact directly with the ribosome. The stimulation of RF-1 and RF-2 is significantly reduced by GTP and GDP, but not by GMP. The polypeptide is Peptide chain release factor 3 (Rippkaea orientalis (strain PCC 8801 / RF-1) (Cyanothece sp. (strain PCC 8801))).